The primary structure comprises 347 residues: Selenide, water dikinase (347 aa).

The active site involves Cys-16. Residues Lys-19 and 47–49 contribute to the ATP site; that span reads TRD. Asp-50 serves as a coordination point for Mg(2+). Residues Asp-67, Asp-90, and 138–140 each bind ATP; that span reads GHS. Asp-90 provides a ligand contact to Mg(2+). Residue Asp-226 participates in Mg(2+) binding.

It belongs to the selenophosphate synthase 1 family. Class I subfamily. In terms of assembly, homodimer. Mg(2+) is required as a cofactor.

It catalyses the reaction hydrogenselenide + ATP + H2O = selenophosphate + AMP + phosphate + 2 H(+). Its function is as follows. Synthesizes selenophosphate from selenide and ATP. The chain is Selenide, water dikinase from Photorhabdus laumondii subsp. laumondii (strain DSM 15139 / CIP 105565 / TT01) (Photorhabdus luminescens subsp. laumondii).